Reading from the N-terminus, the 912-residue chain is Protein translocase subunit SecA (912 aa).

ATP is bound by residues glutamine 87, 105-109, and aspartate 508; that span reads GEGKT. The segment at 869-912 is disordered; that stretch reads EQMQGGNAPVPVSQVTRDEPKVGRNDPCPCGSGKKYKHCHGQLS. Residues cysteine 896, cysteine 898, cysteine 907, and histidine 908 each coordinate Zn(2+). Over residues 902–912 the composition is skewed to basic residues; sequence KKYKHCHGQLS.

This sequence belongs to the SecA family. In terms of assembly, monomer and homodimer. Part of the essential Sec protein translocation apparatus which comprises SecA, SecYEG and auxiliary proteins SecDF-YajC and YidC. It depends on Zn(2+) as a cofactor.

Its subcellular location is the cell inner membrane. The protein localises to the cytoplasm. The catalysed reaction is ATP + H2O + cellular proteinSide 1 = ADP + phosphate + cellular proteinSide 2.. In terms of biological role, part of the Sec protein translocase complex. Interacts with the SecYEG preprotein conducting channel. Has a central role in coupling the hydrolysis of ATP to the transfer of proteins into and across the cell membrane, serving both as a receptor for the preprotein-SecB complex and as an ATP-driven molecular motor driving the stepwise translocation of polypeptide chains across the membrane. This chain is Protein translocase subunit SecA, found in Xanthomonas axonopodis pv. citri (strain 306).